A 169-amino-acid polypeptide reads, in one-letter code: Disulfide bond formation protein B (169 aa).

The Cytoplasmic portion of the chain corresponds to 1-13 (MSQLQQFCHNRFS). A helical membrane pass occupies residues 14–30 (WGLLLLSAIGLELAALF). Over 31–48 (FQYGMDLAPCVMCIYIRV) the chain is Periplasmic. A disulfide bridge connects residues C40 and C43. The helical transmembrane segment at 49-64 (AVLGIILAALIGILQP) threads the bilayer. Residues 65–71 (KVWLLRL) are Cytoplasmic-facing. Residues 72–89 (VGMAGWAVSAVWGFKLAY) traverse the membrane as a helical segment. At 90 to 144 (ELNQMQVNPSPFATCSFYPEFPSFMPLDTWLPSVFSPTGMCSDSPWSWLSVSMAQ) the chain is on the periplasmic side. C104 and C130 are disulfide-bonded. A helical transmembrane segment spans residues 145–163 (WMMLGFAIYGVIWLLMLLP). At 164 to 169 (ALKSAK) the chain is on the cytoplasmic side.

The protein belongs to the DsbB family.

Its subcellular location is the cell inner membrane. In terms of biological role, required for disulfide bond formation in some periplasmic proteins. Acts by oxidizing the DsbA protein. This Shewanella frigidimarina (strain NCIMB 400) protein is Disulfide bond formation protein B.